Reading from the N-terminus, the 638-residue chain is Influenza virus NS1A-binding protein homolog (638 aa).

Residues 32–99 form the BTB domain; it reads CDVKLQVCGH…AYTSQLKAET (68 aa). Residues 134-233 enclose the BACK domain; it reads GISCRNFVNT…YYSADHKLLD (100 aa). The interval 251 to 273 is disordered; that stretch reads IQKKSPRENNHKNLISSSSGSLS. 6 Kelch repeats span residues 365-411, 412-459, 461-508, 509-555, 557-602, and 604-638; these read KLIA…VLMD, HLYV…ALNG, LYVV…ELGN, KIYI…VYDG, LLVV…AVGN, and IYAA…LCES.

The protein resides in the cytoplasm. It is found in the cytoskeleton. It localises to the nucleus. In terms of biological role, plays a role in cell division and in the dynamic organization of the actin skeleton as a stabilizer of actin filaments by association with F-actin through Kelch repeats. The sequence is that of Influenza virus NS1A-binding protein homolog (ivns1abp) from Xenopus laevis (African clawed frog).